The chain runs to 594 residues: Serine/threonine-protein kinase UL13 homolog (594 aa).

2 disordered regions span residues 1-105 and 128-183; these read MARS…TSQC and ECDA…VGGR. Residues 38–47 are compositionally biased toward basic residues; that stretch reads RPKKSTRGRS. Residues 223–594 enclose the Protein kinase domain; that stretch reads GEIPKFGGAG…SIPLLWTPRP (372 aa). Residues 229-237 and lysine 248 contribute to the ATP site; that span reads GGAGSYGEV. Aspartate 349 (proton acceptor) is an active-site residue.

Belongs to the protein kinase superfamily. Ser/Thr protein kinase family. Autophosphorylated.

It is found in the virion tegument. Its subcellular location is the host nucleus. It carries out the reaction L-seryl-[protein] + ATP = O-phospho-L-seryl-[protein] + ADP + H(+). The catalysed reaction is L-threonyl-[protein] + ATP = O-phospho-L-threonyl-[protein] + ADP + H(+). In terms of biological role, multifunctional serine/threonine kinase that plays a role in several processes including egress of virus particles from the nucleus, modulation of the actin cytoskeleton and regulation of viral and cellular gene expression. Regulates the nuclear localization of viral envelopment factors UL34 and UL31 homologs, by phosphorylating the US3 kinase homolog, indicating a role in nuclear egress. Disrupts host nuclear lamins, including LMNA and LMNB1. Phosphorylates the viral Fc receptor composed of glycoproteins E (gE) and I (gI). Phosphorylation of glycoprotein E (gE) by UL13 homolog alters its subcellular localization, from the host early endosome to the plasma membrane. Participates in the transcriptional regulation of cellular and viral mRNAs mainly by phosphorylating the viral transcriptional regulator ICP22 homolog. This is Serine/threonine-protein kinase UL13 homolog from Equus caballus (Horse).